Reading from the N-terminus, the 183-residue chain is Ras-related protein Rap-2c (183 aa).

Gly-10–Ser-17 is a GTP binding site. The Effector region motif lies at Tyr-32–Tyr-40. GTP contacts are provided by residues Asp-57–Thr-61 and Asn-116–Asp-119. Residues Cys-176 and Cys-177 are each lipidated (S-palmitoyl cysteine). Cys-180 carries the post-translational modification Cysteine methyl ester. Cys-180 is lipidated: S-geranylgeranyl cysteine. The propeptide at Val-181–Gln-183 is removed in mature form.

This sequence belongs to the small GTPase superfamily. Ras family. Palmitoylated. Palmitoylation is required for association with recycling endosome membranes and activation of TNIK.

It localises to the cytoplasm. The protein localises to the recycling endosome membrane. It catalyses the reaction GTP + H2O = GDP + phosphate + H(+). In terms of biological role, small GTP-binding protein which cycles between a GDP-bound inactive and a GTP-bound active form. May play a role in cytoskeletal rearrangements and regulate cell spreading through activation of the effector TNIK. May play a role in SRE-mediated gene transcription. The sequence is that of Ras-related protein Rap-2c (RAP2C) from Bos taurus (Bovine).